The chain runs to 196 residues: Phosphoheptose isomerase (196 aa).

The 161-residue stretch at 36-196 (MVACLMNEGK…AVDYMLLGGD (161 aa)) folds into the SIS domain. 51-53 (NGG) is a substrate binding site. The Zn(2+) site is built by H60 and E64. Substrate contacts are provided by residues E64, 93–94 (ND), 119–121 (STS), S124, and Q174. Zn(2+)-binding residues include Q174 and H182.

The protein belongs to the SIS family. GmhA subfamily. In terms of assembly, homotetramer. It depends on Zn(2+) as a cofactor.

Its subcellular location is the cytoplasm. It catalyses the reaction 2 D-sedoheptulose 7-phosphate = D-glycero-alpha-D-manno-heptose 7-phosphate + D-glycero-beta-D-manno-heptose 7-phosphate. It participates in carbohydrate biosynthesis; D-glycero-D-manno-heptose 7-phosphate biosynthesis; D-glycero-alpha-D-manno-heptose 7-phosphate and D-glycero-beta-D-manno-heptose 7-phosphate from sedoheptulose 7-phosphate: step 1/1. In terms of biological role, catalyzes the isomerization of sedoheptulose 7-phosphate in D-glycero-D-manno-heptose 7-phosphate. The protein is Phosphoheptose isomerase of Laribacter hongkongensis (strain HLHK9).